The following is a 555-amino-acid chain: Formate--tetrahydrofolate ligase (555 aa).

An ATP-binding site is contributed by 65-72 (TPAGEGKS).

It belongs to the formate--tetrahydrofolate ligase family.

It carries out the reaction (6S)-5,6,7,8-tetrahydrofolate + formate + ATP = (6R)-10-formyltetrahydrofolate + ADP + phosphate. It participates in one-carbon metabolism; tetrahydrofolate interconversion. The chain is Formate--tetrahydrofolate ligase from Staphylococcus aureus (strain MRSA252).